Consider the following 346-residue polypeptide: Phosphoribosylformylglycinamidine cyclo-ligase (346 aa).

The protein belongs to the AIR synthase family.

The protein resides in the cytoplasm. It catalyses the reaction 2-formamido-N(1)-(5-O-phospho-beta-D-ribosyl)acetamidine + ATP = 5-amino-1-(5-phospho-beta-D-ribosyl)imidazole + ADP + phosphate + H(+). It functions in the pathway purine metabolism; IMP biosynthesis via de novo pathway; 5-amino-1-(5-phospho-D-ribosyl)imidazole from N(2)-formyl-N(1)-(5-phospho-D-ribosyl)glycinamide: step 2/2. The sequence is that of Phosphoribosylformylglycinamidine cyclo-ligase from Prochlorococcus marinus (strain NATL2A).